The chain runs to 645 residues: Mediator of RNA polymerase II transcription subunit 17 (645 aa).

The interval 215-234 is disordered; that stretch reads KAEDEESGSPPASPSGSGAA. A compositionally biased stretch (low complexity) spans 222–234; it reads GSPPASPSGSGAA.

It belongs to the Mediator complex subunit 17 family. As to quaternary structure, component of the Mediator complex.

It localises to the nucleus. In terms of biological role, component of the Mediator complex, a coactivator involved in the regulated transcription of nearly all RNA polymerase II-dependent genes. Mediator functions as a bridge to convey information from gene-specific regulatory proteins to the basal RNA polymerase II transcription machinery. Mediator is recruited to promoters by direct interactions with regulatory proteins and serves as a scaffold for the assembly of a functional preinitiation complex with RNA polymerase II and the general transcription factors. The chain is Mediator of RNA polymerase II transcription subunit 17 (MED17) from Anopheles gambiae (African malaria mosquito).